A 198-amino-acid chain; its full sequence is Glycerol-3-phosphate acyltransferase (198 aa).

5 consecutive transmembrane segments (helical) span residues Leu-10–Val-30, Gly-57–Leu-77, Ile-86–Phe-106, Val-118–Phe-138, and Ala-160–Ile-180.

This sequence belongs to the PlsY family. As to quaternary structure, probably interacts with PlsX.

The protein localises to the cell inner membrane. The catalysed reaction is an acyl phosphate + sn-glycerol 3-phosphate = a 1-acyl-sn-glycero-3-phosphate + phosphate. The protein operates within lipid metabolism; phospholipid metabolism. Functionally, catalyzes the transfer of an acyl group from acyl-phosphate (acyl-PO(4)) to glycerol-3-phosphate (G3P) to form lysophosphatidic acid (LPA). This enzyme utilizes acyl-phosphate as fatty acyl donor, but not acyl-CoA or acyl-ACP. The sequence is that of Glycerol-3-phosphate acyltransferase from Anaplasma marginale (strain St. Maries).